The chain runs to 1378 residues: F-box protein At3g54460 (1378 aa).

Residues 65–96 are compositionally biased toward basic and acidic residues; that stretch reads GDHDVENSGTIEDGRLETPQKRRKCVEGESSG. Residues 65–113 are disordered; that stretch reads GDHDVENSGTIEDGRLETPQKRRKCVEGESSGKRKTPKSKRRVLSGSKE. Basic residues predominate over residues 97–107; sequence KRKTPKSKRRV. An F-box domain is found at 282–328; that stretch reads VSGVWDLSDDVLISILMKLDTKDLFSIAAVCRLFRSLTSLIVPCMNL. A CW-type zinc finger spans residues 571–622; the sequence is DVESDIWMQCDSCSKWRRIIDEGVSVTGSAWFCSNNNDPAYQSCNDPEELWD. Zn(2+) contacts are provided by Cys-580, Cys-583, Cys-603, and Cys-614. The Helicase ATP-binding domain occupies 720-885; it reads KWFYPKFLEN…LSHIQPLLKF (166 aa). Residue 733–740 coordinates ATP; that stretch reads DVPALKVA. The DEAH box signature appears at 834 to 837; it reads DEGH. The Helicase C-terminal domain maps to 1185-1324; that stretch reads DCGSQMVFVD…DAEKSDRLLS (140 aa).

This sequence belongs to the helicase family.

The chain is F-box protein At3g54460 from Arabidopsis thaliana (Mouse-ear cress).